The sequence spans 265 residues: Uridylate kinase (265 aa).

Residues M1–S29 form a disordered region. Residue K40–G43 coordinates ATP. G81 contributes to the UMP binding site. Residues G82 and R86 each coordinate ATP. Residues D101 and M162 to T169 contribute to the UMP site. F195 and D198 together coordinate ATP.

The protein belongs to the UMP kinase family. Homohexamer.

The protein resides in the cytoplasm. The enzyme catalyses UMP + ATP = UDP + ADP. Its pathway is pyrimidine metabolism; CTP biosynthesis via de novo pathway; UDP from UMP (UMPK route): step 1/1. Inhibited by UTP. Functionally, catalyzes the reversible phosphorylation of UMP to UDP. The sequence is that of Uridylate kinase from Mycolicibacterium paratuberculosis (strain ATCC BAA-968 / K-10) (Mycobacterium paratuberculosis).